Consider the following 192-residue polypeptide: Probable thymidylate kinase (192 aa).

G8–S15 lines the ATP pocket.

It belongs to the thymidylate kinase family.

The enzyme catalyses dTMP + ATP = dTDP + ADP. This chain is Probable thymidylate kinase, found in Pyrobaculum aerophilum (strain ATCC 51768 / DSM 7523 / JCM 9630 / CIP 104966 / NBRC 100827 / IM2).